We begin with the raw amino-acid sequence, 137 residues long: Large ribosomal subunit protein uL16 (137 aa).

Residues 1–22 (MLQPKRTKFRKQQKGRNRGLAH) are disordered.

Belongs to the universal ribosomal protein uL16 family. As to quaternary structure, part of the 50S ribosomal subunit.

Its function is as follows. Binds 23S rRNA and is also seen to make contacts with the A and possibly P site tRNAs. This is Large ribosomal subunit protein uL16 from Saccharophagus degradans (strain 2-40 / ATCC 43961 / DSM 17024).